The chain runs to 25 residues: Omega-conotoxin CVIB (25 aa).

3 disulfide bridges follow: cysteine 1–cysteine 16, cysteine 8–cysteine 20, and cysteine 15–cysteine 25. Cysteine 25 is modified (cysteine amide).

The protein belongs to the conotoxin O1 superfamily. Expressed by the venom duct.

It is found in the secreted. In terms of biological role, omega-conotoxins act at presynaptic membranes, they bind and block voltage-gated calcium channels (Cav). This toxin blocks N-, P- and Q-type calcium channels. It shows high activities on Cav2.1/CACNA1A (IC(50)=11 nM) and Cav2.2/CACNA1B (IC(50)=7.7 nM). In addition, it shows a higher potency when Cav2.2/CACNA1B is only expressed with the ancillary subunit CACNB3 (IC(50)=1.6 nM) than on Cav2.2/CACNA1B expressed with the ancillary subunits CACNA2D1 and CACNB3 (IC(50)=12 nM). Both the Cav2.2/CACNA1B block by this toxin and the recovery are voltage-independent. It is noteworthy that ancillary subunits beta do not modulate recovery from this toxin block, since Cav2.2/CACNA1B expressed with either the ancillary subunit CACNB2a (isoform 2a) or with CACNB3 exhibits moderate recovery. The protein is Omega-conotoxin CVIB of Conus catus (Cat cone).